A 311-amino-acid polypeptide reads, in one-letter code: Pantothenate synthetase (311 aa).

Residue 43-50 (MGALHEGH) coordinates ATP. The active-site Proton donor is the His50. Gln75 contacts (R)-pantoate. Position 75 (Gln75) interacts with beta-alanine. 161-164 (GEKD) is an ATP binding site. Gln167 contributes to the (R)-pantoate binding site. Residues Val190 and 198–201 (MSSR) contribute to the ATP site.

The protein belongs to the pantothenate synthetase family. Homodimer.

The protein resides in the cytoplasm. It carries out the reaction (R)-pantoate + beta-alanine + ATP = (R)-pantothenate + AMP + diphosphate + H(+). It participates in cofactor biosynthesis; (R)-pantothenate biosynthesis; (R)-pantothenate from (R)-pantoate and beta-alanine: step 1/1. In terms of biological role, catalyzes the condensation of pantoate with beta-alanine in an ATP-dependent reaction via a pantoyl-adenylate intermediate. The protein is Pantothenate synthetase of Mycolicibacterium vanbaalenii (strain DSM 7251 / JCM 13017 / BCRC 16820 / KCTC 9966 / NRRL B-24157 / PYR-1) (Mycobacterium vanbaalenii).